Consider the following 147-residue polypeptide: Small ribosomal subunit protein bS16 (147 aa).

A disordered region spans residues 89–147 (AWTHGNNPKKAEPGKKAQERAKERADKAEAKAAAAAEAAAAPAEEAPAEAAPAEETSES). The span at 97-118 (KKAEPGKKAQERAKERADKAEA) shows a compositional bias: basic and acidic residues. Residues 119-147 (KAAAAAEAAAAPAEEAPAEAAPAEETSES) show a composition bias toward low complexity.

Belongs to the bacterial ribosomal protein bS16 family.

This Hyphomonas neptunium (strain ATCC 15444) protein is Small ribosomal subunit protein bS16.